We begin with the raw amino-acid sequence, 351 residues long: MKKSTLALVVMGIVASASVQAAEIYNKDGNKLDVYGKVKAMHYMSDNASKDGDQSYIRFGFKGETQINDQLTGYGRWEAEFAGNKAESDTAQQKTRLAFAGLKYKDLGSFDYGRNLGALYDVEAWTDMFPEFGGDSSAQTDNFMTKRASGLATYRNTDFFGVIDGLNLTLQYQGKNENRDVKKQNGDGFGTSLTYDFGGSDFAISGAYTNSDRTNEQNLQSRGTGKRAEAWATGLKYDANNIYLATFYSETRKMTPITGGFANKTQNFEAVAQYQFDFGLRPSLGYVLSKGKDIEGIGDEDLVNYIDVGATYYFNKNMSAFVDYKINQLDSDNKLNINNDDIVAVGMTYQF.

The first 21 residues, 1 to 21, serve as a signal peptide directing secretion; that stretch reads MKKSTLALVVMGIVASASVQA.

It belongs to the Gram-negative porin family. Homotrimer. Forms mixed heterotrimers with OmpC and with OmpF; other mixed heterotrimers are also probable.

It localises to the cell outer membrane. Uptake of inorganic phosphate, phosphorylated compounds, and some other negatively charged solutes. The sequence is that of Outer membrane porin PhoE (phoE) from Escherichia coli (strain K12).